Here is a 505-residue protein sequence, read N- to C-terminus: Probable malate:quinone oxidoreductase (505 aa).

Belongs to the MQO family. The cofactor is FAD.

The enzyme catalyses (S)-malate + a quinone = a quinol + oxaloacetate. The protein operates within carbohydrate metabolism; tricarboxylic acid cycle; oxaloacetate from (S)-malate (quinone route): step 1/1. This is Probable malate:quinone oxidoreductase from Pseudomonas fluorescens.